The sequence spans 139 residues: NADPH-dependent 7-cyano-7-deazaguanine reductase (139 aa).

The Thioimide intermediate role is filled by Cys34. The Proton donor role is filled by Asp41. Substrate contacts are provided by residues 56 to 58 (IEL) and 75 to 76 (HE).

It belongs to the GTP cyclohydrolase I family. QueF type 1 subfamily.

Its subcellular location is the cytoplasm. It catalyses the reaction 7-aminomethyl-7-carbaguanine + 2 NADP(+) = 7-cyano-7-deazaguanine + 2 NADPH + 3 H(+). The protein operates within tRNA modification; tRNA-queuosine biosynthesis. Functionally, catalyzes the NADPH-dependent reduction of 7-cyano-7-deazaguanine (preQ0) to 7-aminomethyl-7-deazaguanine (preQ1). This is NADPH-dependent 7-cyano-7-deazaguanine reductase from Nitrosomonas europaea (strain ATCC 19718 / CIP 103999 / KCTC 2705 / NBRC 14298).